The sequence spans 137 residues: NADPH-dependent 7-cyano-7-deazaguanine reductase (137 aa).

The active-site Thioimide intermediate is cysteine 45. Aspartate 52 serves as the catalytic Proton donor. Substrate is bound by residues 68–70 and 87–88; these read VEL and QE.

This sequence belongs to the GTP cyclohydrolase I family. QueF type 1 subfamily.

Its subcellular location is the cytoplasm. The catalysed reaction is 7-aminomethyl-7-carbaguanine + 2 NADP(+) = 7-cyano-7-deazaguanine + 2 NADPH + 3 H(+). The protein operates within tRNA modification; tRNA-queuosine biosynthesis. Its function is as follows. Catalyzes the NADPH-dependent reduction of 7-cyano-7-deazaguanine (preQ0) to 7-aminomethyl-7-deazaguanine (preQ1). The protein is NADPH-dependent 7-cyano-7-deazaguanine reductase of Thermotoga petrophila (strain ATCC BAA-488 / DSM 13995 / JCM 10881 / RKU-1).